Reading from the N-terminus, the 345-residue chain is UPF0284 protein STK_21430 (345 aa).

The protein belongs to the UPF0284 family.

This is UPF0284 protein STK_21430 from Sulfurisphaera tokodaii (strain DSM 16993 / JCM 10545 / NBRC 100140 / 7) (Sulfolobus tokodaii).